The following is a 4423-amino-acid chain: Nonribosomal peptide synthetase 7 (4423 aa).

Residues 572-986 form a condensation 1 region; it reads NIYPCTSIQE…LISQDDKNRI (415 aa). Residues 1007 to 1404 form an adenylation 1 region; that stretch reads ERIQKQPSAV…GRRDTQVKIR (398 aa). A Carrier 1 domain is found at 1533 to 1609; it reads LPLTETEQKL…DLARTIDERN (77 aa). Ser1570 is subject to O-(pantetheine 4'-phosphoryl)serine. Positions 1657–2066 are condensation 2; that stretch reads EDVYPCTSLQ…QFLDETHHET (410 aa). The interval 2102-2499 is adenylation 2; that stretch reads RDVAKEQPDS…YIGRMGSEVK (398 aa). In terms of domain architecture, Carrier 2 spans 2642-2718; it reads VPQTRIGKKL…DCARILEADQ (77 aa). Ser2679 carries the O-(pantetheine 4'-phosphoryl)serine modification. Residues 2764-3170 form a condensation 3 region; that stretch reads EDVYPCTPMQ…AASASSDDQT (407 aa). Residues 3205-3609 form an adenylation 3 region; sequence RSLETRPDSQ…GRGDSQIKIR (405 aa). Residues 3731–3804 form the Carrier 3 domain; that stretch reads TESEYITRTL…KMAVVAQHQT (74 aa). Ser3765 is modified (O-(pantetheine 4'-phosphoryl)serine). A condensation 4 region spans residues 3875–4278; it reads TFVLDAEGDL…SQDEKLALLG (404 aa). Residues 4288–4300 are compositionally biased toward polar residues; it reads KLTKLQRVNSPKE. Residues 4288–4312 are disordered; that stretch reads KLTKLQRVNSPKEQTLRKDKPTNGV.

Belongs to the NRP synthetase family.

The protein operates within secondary metabolite biosynthesis. Its function is as follows. Nonribosomal peptide synthetase; part of the gene cluster that mediates the biosynthesis of the lipopeptide fusaristatin A. Fusaristatin A consists of a polyketide chain linked to three amino acid residues glutamine (Gln), dehydroalanine (dehydro-Ala), and beta-aminoisobutyric acid. The biosynthesis starts with formation of a linear polyketide chain by the highly reducing polyketide synthase PKS6. The gene cluster does not contain an acyl-CoA ligase or an acyl-transferase, and it is therefore predicted that the polyketide is transferred directly to the nonribosomal peptide synthetase NRPS7. Modules 1-3 from NRPS7 incorporate dehydro-Ala, Gln, and beta-aminoisobutyric acid in the compound, which is released by cyclization. The beta-aminoisobutyric acid units are most likely not freely available to the NRPS, but can be synthesized from thymine, which requires a dehydrogenase, a monooxygenase, and an aminotransferase. The fusaristatin A cluster contains a cytochrome P450 monooxygenase (FGSG_08207) and an aminotransferase (FGSG_17085), which theoretically can perform two of the enzymatic steps. The enzymes may however also be involved in biosynthesis of dehydroalanine or modification of the polyketide. The dehydro-Ala residue can be a result of cyclization, where serine is dehydrated. The last gene of the cluster encodes a protein with an A/B barrel domain found in variable enzymes, which hampers functional prediction. This is Nonribosomal peptide synthetase 7 from Gibberella zeae (strain ATCC MYA-4620 / CBS 123657 / FGSC 9075 / NRRL 31084 / PH-1) (Wheat head blight fungus).